The chain runs to 34 residues: Photosystem II reaction center protein M (34 aa).

The chain crosses the membrane as a helical span at residues 7–27 (GFVASLMFILVPAIFLIVLYI).

This sequence belongs to the PsbM family. PSII is composed of 1 copy each of membrane proteins PsbA, PsbB, PsbC, PsbD, PsbE, PsbF, PsbH, PsbI, PsbJ, PsbK, PsbL, PsbM, PsbT, PsbX, PsbY, PsbZ, Psb30/Ycf12, peripheral proteins PsbO, CyanoQ (PsbQ), PsbU, PsbV and a large number of cofactors. It forms dimeric complexes.

The protein localises to the cellular thylakoid membrane. Its function is as follows. One of the components of the core complex of photosystem II (PSII). PSII is a light-driven water:plastoquinone oxidoreductase that uses light energy to abstract electrons from H(2)O, generating O(2) and a proton gradient subsequently used for ATP formation. It consists of a core antenna complex that captures photons, and an electron transfer chain that converts photonic excitation into a charge separation. This subunit is found at the monomer-monomer interface. This is Photosystem II reaction center protein M from Synechococcus sp. (strain CC9902).